The sequence spans 541 residues: EH domain-containing protein 4 (541 aa).

Residue Met-1 is modified to N-acetylmethionine. A disordered region spans residues 1-20 (MFSWMGRQAGGRERSGGMDA). Position 15 is a phosphoserine (Ser-15). The Dynamin-type G domain maps to 58–289 (FENKPMILLV…DLFRDIQSLP (232 aa)). Positions 68 to 75 (GQYSTGKT) are G1 motif. 68 to 75 (GQYSTGKT) is a binding site for ATP. A G2 motif region spans residues 94–95 (EP). A G3 motif region spans residues 156 to 159 (DSPG). Ser-162 is subject to Phosphoserine. A G4 motif region spans residues 222–225 (NKAD). Lys-223 contributes to the ATP binding site. Residue Val-246 is a region of interest, G5 motif. Trp-261 contacts ATP. One can recognise an EH domain in the interval 447-535 (DKPVYDELFY…PHLVPPSHRK (89 aa)). Tyr-451 is modified (phosphotyrosine). Ser-459 is modified (phosphoserine). Positions 479-514 (LPNSVLGKIWKLADCDCDGMLDEEEFALAKHLIKIK) constitute an EF-hand domain. Residues Asp-492, Asp-494, Asp-496, Met-498, and Glu-503 each contribute to the Ca(2+) site.

It belongs to the TRAFAC class dynamin-like GTPase superfamily. Dynamin/Fzo/YdjA family. EHD subfamily. Homooligomer, and heterooligomer with EHD1, EHD2 and EHD3. Forms a complex with EHD4 and MICALL1; the complex controls CDH5 trafficking and coordinates angiogenesis.

Its subcellular location is the early endosome membrane. The protein localises to the recycling endosome membrane. It localises to the cell membrane. It is found in the cell junction. The protein resides in the adherens junction. ATP- and membrane-binding protein that probably controls membrane reorganization/tubulation upon ATP hydrolysis. Plays a role in early endosomal transport. During sprouting angiogenesis, in complex with PACSIN2 and MICALL1, forms recycling endosome-like tubular structure at asymmetric adherens junctions to control CDH5 trafficking. This Mus musculus (Mouse) protein is EH domain-containing protein 4.